The primary structure comprises 276 residues: MSLWFLVFLSVLQGVTELFPVSSLGHTLLVPALFGMHIDKHAPQLLPFLVALHLGTALALLWYFRARWVALIGGFFAQLGGRKNDDGHLMWALIIGTIPTGIVGLLLEKRIERVFHDLRIVAIALIVNGVLLWLGDRIQRSRAHQAPEKMTFKQAFFVGLAQIGALIPGFSRSGLTMIAGNAAGLTAEKAAEFSFLLGTPIIFAAGVLELPKLFHARDQLADALLGGVLTAIAAYLSVRFLMRYFEGRGRLASFGVYCVIAGVFCLGWFMLHPQPV.

The next 8 membrane-spanning stretches (helical) occupy residues 1–21 (MSLWFLVFLSVLQGVTELFPV), 44–64 (QLLPFLVALHLGTALALLWYF), 87–107 (GHLMWALIIGTIPTGIVGLLL), 114–134 (VFHDLRIVAIALIVNGVLLWL), 150–170 (MTFKQAFFVGLAQIGALIPGF), 190–210 (AAEFSFLLGTPIIFAAGVLEL), 222–242 (DALLGGVLTAIAAYLSVRFLM), and 251–271 (LASFGVYCVIAGVFCLGWFML).

This sequence belongs to the UppP family.

It is found in the cell inner membrane. It carries out the reaction di-trans,octa-cis-undecaprenyl diphosphate + H2O = di-trans,octa-cis-undecaprenyl phosphate + phosphate + H(+). Its function is as follows. Catalyzes the dephosphorylation of undecaprenyl diphosphate (UPP). Confers resistance to bacitracin. The protein is Undecaprenyl-diphosphatase 2 of Burkholderia lata (strain ATCC 17760 / DSM 23089 / LMG 22485 / NCIMB 9086 / R18194 / 383).